An 845-amino-acid chain; its full sequence is Lon protease (845 aa).

The Lon N-terminal domain occupies 45 to 242; it reads MPILALRNMI…RLLYLLHKEL (198 aa). 393–400 lines the ATP pocket; it reads GPPGVGKT. The Lon proteolytic domain occupies 629–811; the sequence is NGDAGVVIGL…NEVLKEALLE (183 aa). Active-site residues include serine 717 and lysine 760.

This sequence belongs to the peptidase S16 family. Homohexamer. Organized in a ring with a central cavity.

Its subcellular location is the cytoplasm. It carries out the reaction Hydrolysis of proteins in presence of ATP.. ATP-dependent serine protease that mediates the selective degradation of mutant and abnormal proteins as well as certain short-lived regulatory proteins. Required for cellular homeostasis and for survival from DNA damage and developmental changes induced by stress. Degrades polypeptides processively to yield small peptide fragments that are 5 to 10 amino acids long. Binds to DNA in a double-stranded, site-specific manner. This is Lon protease from Porphyromonas gingivalis (strain ATCC 33277 / DSM 20709 / CIP 103683 / JCM 12257 / NCTC 11834 / 2561).